Reading from the N-terminus, the 147-residue chain is D-aminoacyl-tRNA deacylase (147 aa).

A Gly-cisPro motif, important for rejection of L-amino acids motif is present at residues 136–137; sequence GP.

It belongs to the DTD family. As to quaternary structure, homodimer.

It is found in the cytoplasm. It carries out the reaction glycyl-tRNA(Ala) + H2O = tRNA(Ala) + glycine + H(+). It catalyses the reaction a D-aminoacyl-tRNA + H2O = a tRNA + a D-alpha-amino acid + H(+). Functionally, an aminoacyl-tRNA editing enzyme that deacylates mischarged D-aminoacyl-tRNAs. Also deacylates mischarged glycyl-tRNA(Ala), protecting cells against glycine mischarging by AlaRS. Acts via tRNA-based rather than protein-based catalysis; rejects L-amino acids rather than detecting D-amino acids in the active site. By recycling D-aminoacyl-tRNA to D-amino acids and free tRNA molecules, this enzyme counteracts the toxicity associated with the formation of D-aminoacyl-tRNA entities in vivo and helps enforce protein L-homochirality. The polypeptide is D-aminoacyl-tRNA deacylase (Streptococcus agalactiae serotype Ia (strain ATCC 27591 / A909 / CDC SS700)).